Here is a 388-residue protein sequence, read N- to C-terminus: Succinyl-diaminopimelate desuccinylase (388 aa).

Histidine 84 serves as a coordination point for Zn(2+). Aspartate 86 is an active-site residue. Aspartate 115 contributes to the Zn(2+) binding site. The active-site Proton acceptor is glutamate 146. 3 residues coordinate Zn(2+): glutamate 147, glutamate 175, and histidine 360.

It belongs to the peptidase M20A family. DapE subfamily. As to quaternary structure, homodimer. Zn(2+) is required as a cofactor. Requires Co(2+) as cofactor.

The enzyme catalyses N-succinyl-(2S,6S)-2,6-diaminopimelate + H2O = (2S,6S)-2,6-diaminopimelate + succinate. It functions in the pathway amino-acid biosynthesis; L-lysine biosynthesis via DAP pathway; LL-2,6-diaminopimelate from (S)-tetrahydrodipicolinate (succinylase route): step 3/3. Functionally, catalyzes the hydrolysis of N-succinyl-L,L-diaminopimelic acid (SDAP), forming succinate and LL-2,6-diaminopimelate (DAP), an intermediate involved in the bacterial biosynthesis of lysine and meso-diaminopimelic acid, an essential component of bacterial cell walls. The sequence is that of Succinyl-diaminopimelate desuccinylase from Helicobacter pylori (strain G27).